A 1052-amino-acid polypeptide reads, in one-letter code: Ubiquitin-like modifier-activating enzyme 6 (1052 aa).

An N-acetylmethionine modification is found at M1. A disordered region spans residues 1-21; that stretch reads MEGSEPVAAHQGEEASCSSWG. R46 lines the ATP pocket. T54 is modified (phosphothreonine). Position 301 is a phosphoserine (S301). 2 residues coordinate ATP: A470 and D497. Mg(2+) is bound by residues D499 and E502. Positions 505, 508, 509, and 521 each coordinate ATP. K544 is modified (N6-acetyllysine). ATP is bound at residue V545. D569 contributes to the Mg(2+) binding site. N570 contacts ATP. C625 (glycyl thioester intermediate) is an active-site residue. N6-acetyllysine is present on K729. At S737 the chain carries Phosphoserine.

Belongs to the ubiquitin-activating E1 family. As to quaternary structure, forms a thioester with UBD in cells stimulated with tumor necrosis factor-alpha (TNFa) and interferon-gamma (IFNg). In terms of tissue distribution, widely expressed. Isoform 2 is predominantly expressed in testis with higher expression in adult testis than in fetal testis.

The enzyme catalyses ATP + ubiquitin + [E1 ubiquitin-activating enzyme]-L-cysteine = AMP + diphosphate + S-ubiquitinyl-[E1 ubiquitin-activating enzyme]-L-cysteine.. Its pathway is protein modification; protein ubiquitination. Its function is as follows. Activates ubiquitin by first adenylating its C-terminal glycine residue with ATP, and thereafter linking this residue to the side chain of a cysteine residue in E1, yielding a ubiquitin-E1 thioester and free AMP. Specific for ubiquitin, does not activate ubiquitin-like peptides. Also activates UBD/FAT10 conjugation via adenylation of its C-terminal glycine. Differs from UBE1 in its specificity for substrate E2 charging. Does not charge cell cycle E2s, such as CDC34. Essential for embryonic development. Isoform 2 may play a key role in ubiquitin system and may influence spermatogenesis and male fertility. The polypeptide is Ubiquitin-like modifier-activating enzyme 6 (UBA6) (Homo sapiens (Human)).